A 1407-amino-acid polypeptide reads, in one-letter code: DNA-directed RNA polymerase subunit beta' (1407 aa).

Cys-70, Cys-72, Cys-85, and Cys-88 together coordinate Zn(2+). Positions 458, 460, and 462 each coordinate Mg(2+). Residues Cys-814, Cys-888, Cys-895, and Cys-898 each coordinate Zn(2+).

It belongs to the RNA polymerase beta' chain family. In terms of assembly, the RNAP catalytic core consists of 2 alpha, 1 beta, 1 beta' and 1 omega subunit. When a sigma factor is associated with the core the holoenzyme is formed, which can initiate transcription. The cofactor is Mg(2+). Zn(2+) is required as a cofactor.

It catalyses the reaction RNA(n) + a ribonucleoside 5'-triphosphate = RNA(n+1) + diphosphate. Its function is as follows. DNA-dependent RNA polymerase catalyzes the transcription of DNA into RNA using the four ribonucleoside triphosphates as substrates. This Leptothrix cholodnii (strain ATCC 51168 / LMG 8142 / SP-6) (Leptothrix discophora (strain SP-6)) protein is DNA-directed RNA polymerase subunit beta'.